We begin with the raw amino-acid sequence, 402 residues long: Phosphoglycerate kinase (402 aa).

Substrate contacts are provided by residues 30–32, R46, 70–73, R126, and R159; these read DFN and HLGR. Residues K210, E332, and 358–361 contribute to the ATP site; that span reads GGDT.

Belongs to the phosphoglycerate kinase family. As to quaternary structure, monomer.

The protein localises to the cytoplasm. The catalysed reaction is (2R)-3-phosphoglycerate + ATP = (2R)-3-phospho-glyceroyl phosphate + ADP. It functions in the pathway carbohydrate degradation; glycolysis; pyruvate from D-glyceraldehyde 3-phosphate: step 2/5. The chain is Phosphoglycerate kinase from Helicobacter hepaticus (strain ATCC 51449 / 3B1).